Reading from the N-terminus, the 1183-residue chain is SR-related and CTD-associated factor 4 (1183 aa).

The CID domain occupies 1–139; sequence MDAVNAFNQE…PLLDMAAGTS (139 aa). Lys-49 is modified (N6-acetyllysine). Phosphoserine is present on Ser-154. Disordered regions lie at residues 299–324 and 348–561; these read VPVPSATSPPPPQTPFGYPGDGVQQP and HHQV…QIKS. The span at 367 to 380 shows a compositional bias: pro residues; that stretch reads APPPFPPMPQPGMP. Positions 381–398 are enriched in low complexity; it reads QPGMAQPGLAQPGMAQPT. Residues 399–410 show a composition bias toward pro residues; the sequence is MPQPGMPQPGMP. The segment covering 411–428 has biased composition (low complexity); the sequence is QPGMAQPGLAQPGMAQPG. A compositionally biased stretch (pro residues) spans 429–440; it reads MPQPAMPQPAMP. Residues 457–469 show a composition bias toward polar residues; it reads PTFQSTFQPQNEP. Residues 488–498 are compositionally biased toward basic and acidic residues; sequence EVKRHVPESRK. The span at 499–536 shows a compositional bias: basic residues; the sequence is SRSRSPKRRRSRSGSRSRRSRHRRSRSRSRDRRRHSPR. The segment covering 538-553 has biased composition (basic and acidic residues); that stretch reads RSQERRDREKERERRQ. Residues 569–643 form the RRM domain; the sequence is TTLWVGQLDK…KSIKIAWALN (75 aa). Disordered regions lie at residues 691 to 722, 800 to 858, and 920 to 1183; these read WKGIPKKPDNEVAQNGGAETSHTEPVSPIPKP, LPPG…SLPT, and MPPH…EPPR. Ser-717 is subject to Phosphoserine. Pro residues-rich tracts occupy residues 800 to 823 and 920 to 952; these read LPPGPPPPITPPVSIPPPHTPPIS and MPPHMMHRGPPPGPGGFAMPPPHGMKGPFPPHG. Residues 1006-1020 are compositionally biased toward low complexity; sequence SPSQQPAPAQQQPPQ. Position 1042 is a phosphoserine (Ser-1042). Residues 1047–1122 are compositionally biased toward basic and acidic residues; that stretch reads VENDRERYGS…NRKEKHEVAD (76 aa). The segment covering 1136 to 1145 has biased composition (polar residues); it reads QVGTIDTVSE.

As to quaternary structure, interacts with POLR2A; via C-terminal heptapeptide repeat domain (CTD) phosphorylated at 'Ser-2' and 'Ser-5'.

Its subcellular location is the nucleus. Anti-terminator protein required to prevent early mRNA termination during transcription. Together with SCAF8, acts by suppressing the use of early, alternative poly(A) sites, thereby preventing the accumulation of non-functional truncated proteins. Mechanistically, associates with the phosphorylated C-terminal heptapeptide repeat domain (CTD) of the largest RNA polymerase II subunit (POLR2A), and subsequently binds nascent RNA upstream of early polyadenylation sites to prevent premature mRNA transcript cleavage and polyadenylation. Independently of SCAF8, also acts as a suppressor of transcriptional readthrough. In Mus musculus (Mouse), this protein is SR-related and CTD-associated factor 4.